The following is a 487-amino-acid chain: Betaine aldehyde dehydrogenase (487 aa).

Positions 27 and 93 each coordinate K(+). 149 to 151 (GAW) serves as a coordination point for NAD(+). Lys161 (charge relay system) is an active-site residue. NAD(+)-binding positions include 175–178 (KPSE) and 228–231 (SVPT). Catalysis depends on Glu249, which acts as the Proton acceptor. NAD(+) contacts are provided by Gly251, Cys283, and Glu384. Cys283 (nucleophile) is an active-site residue. Position 283 is a cysteine sulfenic acid (-SOH) (Cys283). 2 residues coordinate K(+): Lys454 and Gly457. Glu461 (charge relay system) is an active-site residue.

It belongs to the aldehyde dehydrogenase family. As to quaternary structure, dimer of dimers. K(+) is required as a cofactor.

The catalysed reaction is betaine aldehyde + NAD(+) + H2O = glycine betaine + NADH + 2 H(+). Its pathway is amine and polyamine biosynthesis; betaine biosynthesis via choline pathway; betaine from betaine aldehyde: step 1/1. Functionally, involved in the biosynthesis of the osmoprotectant glycine betaine. Catalyzes the irreversible oxidation of betaine aldehyde to the corresponding acid. The sequence is that of Betaine aldehyde dehydrogenase from Mesorhizobium japonicum (strain LMG 29417 / CECT 9101 / MAFF 303099) (Mesorhizobium loti (strain MAFF 303099)).